The following is a 477-amino-acid chain: Glycogen synthase (477 aa).

An ADP-alpha-D-glucose-binding site is contributed by Lys16.

This sequence belongs to the glycosyltransferase 1 family. Bacterial/plant glycogen synthase subfamily.

The enzyme catalyses [(1-&gt;4)-alpha-D-glucosyl](n) + ADP-alpha-D-glucose = [(1-&gt;4)-alpha-D-glucosyl](n+1) + ADP + H(+). It functions in the pathway glycan biosynthesis; glycogen biosynthesis. Functionally, synthesizes alpha-1,4-glucan chains using ADP-glucose. The sequence is that of Glycogen synthase from Oceanobacillus iheyensis (strain DSM 14371 / CIP 107618 / JCM 11309 / KCTC 3954 / HTE831).